Reading from the N-terminus, the 241-residue chain is Transforming protein p29 (241 aa).

The interval 1 to 41 (MPAARAAPAADEPMRDPVAPVRAPALPRPAPGAVAPASGGA) is disordered. 2 S-palmitoyl cysteine; by host lipidation sites follow: Cys-233 and Cys-236. Cys-238 is modified (cysteine methyl ester; by host). Residue Cys-238 is the site of S-farnesyl cysteine; by host attachment. A propeptide spans 239–241 (VLS) (removed in mature form).

This sequence belongs to the small GTPase superfamily. Ras family.

It localises to the host cell membrane. It carries out the reaction GTP + H2O = GDP + phosphate + H(+). With respect to regulation, alternates between an inactive form bound to GDP and an active form bound to GTP. Activated by a guanine nucleotide-exchange factor (GEF) and inactivated by a GTPase-activating protein (GAP). This is Transforming protein p29 (H-RAS) from Mus musculus (Mouse).